The following is a 317-amino-acid chain: MTIDCHEDRRVLLVPHTGRPQNVASAALAAELLDDSGVGVRVLVPAEDTTVATHPVLGQFERVSHSPQATQSVDLVLVLGGDGTFLRAADLAHGADLPVLGINLGHVGFLAEWEKDSLDEAVRRVTKGSFRIEERMTLDVSVYDSNGTAIGRGWALNEVSIENSNRSGVLDATLEIDSRPVSSFGCDGIIVSTPTGSTAYAFSAGGPVLWPELDAILVVPNNAHALFTKPLVVSPRSSVAVESHPSAFPATAVMDGFRSISVPPGARVEVKRGSRSIKWVRLDDIPFTDRLVTKLRLPVEGWRGPKNMIPQINPHSA.

Asp-82 serves as the catalytic Proton acceptor. Residues 82 to 83 (DG), Arg-87, 157 to 158 (NE), Asp-187, and 198 to 203 (TAYAFS) contribute to the NAD(+) site.

The protein belongs to the NAD kinase family. A divalent metal cation is required as a cofactor.

The protein resides in the cytoplasm. The enzyme catalyses NAD(+) + ATP = ADP + NADP(+) + H(+). In terms of biological role, involved in the regulation of the intracellular balance of NAD and NADP, and is a key enzyme in the biosynthesis of NADP. Catalyzes specifically the phosphorylation on 2'-hydroxyl of the adenosine moiety of NAD to yield NADP. In Corynebacterium diphtheriae (strain ATCC 700971 / NCTC 13129 / Biotype gravis), this protein is NAD kinase.